The primary structure comprises 281 residues: 2-dehydro-3-deoxyphosphooctonate aldolase (281 aa).

This sequence belongs to the KdsA family.

Its subcellular location is the cytoplasm. The catalysed reaction is D-arabinose 5-phosphate + phosphoenolpyruvate + H2O = 3-deoxy-alpha-D-manno-2-octulosonate-8-phosphate + phosphate. The protein operates within carbohydrate biosynthesis; 3-deoxy-D-manno-octulosonate biosynthesis; 3-deoxy-D-manno-octulosonate from D-ribulose 5-phosphate: step 2/3. Its pathway is bacterial outer membrane biogenesis; lipopolysaccharide biosynthesis. In Azotobacter vinelandii (strain DJ / ATCC BAA-1303), this protein is 2-dehydro-3-deoxyphosphooctonate aldolase.